Reading from the N-terminus, the 1479-residue chain is WASH complex subunit 2 (1479 aa).

A compositionally biased stretch (low complexity) spans 1-17 (MPEEQPQQQQQPVREQP). Disordered stretches follow at residues 1–25 (MPEE…DVPW), 188–210 (GGLV…TEKK), 240–564 (FIED…GGVK), 576–1383 (FSGK…FDDI), and 1419–1479 (TSTT…NLFD). Acidic residues predominate over residues 242–279 (EDSDSDSSDEEDEEDVDAEDGSDESSSESSSDDDDEKD). A compositionally biased stretch (low complexity) spans 334–349 (SKKSSNSYTSSLSDIL). Over residues 422–431 (DDDLFGDSEE) the composition is skewed to acidic residues. Composition is skewed to low complexity over residues 465 to 475 (TTTSSQPQQKK) and 514 to 532 (TPKP…TTTK). A Phosphothreonine modification is found at T535. The span at 542 to 552 (ASGSESTTGKS) shows a compositional bias: polar residues. Over residues 595–620 (TESKASEDDFFSSDKKSTSATKKDAE) the composition is skewed to basic and acidic residues. Positions 709–723 (PKAPTTATTTTTTKP) are enriched in low complexity. Over residues 765 to 781 (TETKKQPITEEPKKKQD) the composition is skewed to basic and acidic residues. Residues 802–814 (ASISPASPVSTIE) show a composition bias toward polar residues. Residues 839 to 885 (DLTKDEPAKSEPTKVEPTKVEPTKAEPTKVEPAKVEPTKVESDKKES) show a composition bias toward basic and acidic residues. Polar residues predominate over residues 904–916 (KNPTTSSSTTATE). Residues 951-968 (SSTTKKSTTTTTTTTSSK) are compositionally biased toward low complexity. Residues 981 to 990 (KKVEEKKSSD) are compositionally biased toward basic and acidic residues. Composition is skewed to low complexity over residues 991–1000 (FDSFFSGSDD) and 1010–1021 (KTTTTPPLTSTT). Residues 1062–1075 (PLTSNNTKNRTKSI) are compositionally biased toward polar residues. Residues 1091 to 1107 (EKNRSESPTSEKAEPTK) show a composition bias toward basic and acidic residues. The segment covering 1108-1123 (KTSNISSLQNKLSLNP) has biased composition (polar residues). A compositionally biased stretch (low complexity) spans 1147-1162 (STNNDNDSSATDLSDS). 2 stretches are compositionally biased toward polar residues: residues 1163–1174 (GRSSPSVTSPTL) and 1220–1236 (KSGT…TPTQ). S1249 carries the phosphoserine modification. Positions 1277-1292 (EKTSSGKSSPSPTIKS) are enriched in low complexity. Positions 1307 to 1317 (ASTTTKPTASE) are enriched in polar residues. Over residues 1327–1358 (KKSEPETPKETPKETPKEKEQTKEKEQPKETP) the composition is skewed to basic and acidic residues. 2 stretches are compositionally biased toward low complexity: residues 1419 to 1445 (TSTT…AVDN) and 1452 to 1466 (NTTT…TPSK).

The protein belongs to the FAM21 family. In terms of assembly, probable component of the WASH complex.

The protein is WASH complex subunit 2 of Dictyostelium discoideum (Social amoeba).